The primary structure comprises 142 residues: MNSFALLLVCIQACLVQSVFSQCTSRAAVAADRGIIGGYGLGAPCSLGYGLEAPYGWAGYADFGYPAGAYGIDAYGGIGEGNVAVAGELPVAGTTAVAGQVPIMGAVKFGGDVCAAGSVSIAGKCACGCGEYGYGLGAPYLY.

An N-terminal signal peptide occupies residues 1–18 (MNSFALLLVCIQACLVQS).

It belongs to the chorion protein family.

Its function is as follows. This protein is one of many from the eggshell of the gypsy moth. The protein is Chorion class A protein Ld19 of Lymantria dispar (Gypsy moth).